The following is a 281-amino-acid chain: Pantothenate synthetase (281 aa).

ATP is bound at residue 30 to 37; sequence MGYLHEGH. H37 functions as the Proton donor in the catalytic mechanism. Q61 contacts (R)-pantoate. Q61 contacts beta-alanine. 147-150 is an ATP binding site; it reads GQKD. Q153 contributes to the (R)-pantoate binding site. ATP-binding positions include V176 and 184 to 187; that span reads MSSR.

The protein belongs to the pantothenate synthetase family. In terms of assembly, homodimer.

It is found in the cytoplasm. The enzyme catalyses (R)-pantoate + beta-alanine + ATP = (R)-pantothenate + AMP + diphosphate + H(+). It participates in cofactor biosynthesis; (R)-pantothenate biosynthesis; (R)-pantothenate from (R)-pantoate and beta-alanine: step 1/1. Functionally, catalyzes the condensation of pantoate with beta-alanine in an ATP-dependent reaction via a pantoyl-adenylate intermediate. The protein is Pantothenate synthetase of Caldicellulosiruptor saccharolyticus (strain ATCC 43494 / DSM 8903 / Tp8T 6331).